The chain runs to 107 residues: Ferredoxin CarAc (107 aa).

The region spanning 6 to 102 (LKVCAASDMQ…VEVKEGEVYV (97 aa)) is the Rieske domain. [2Fe-2S] cluster-binding residues include Cys-46, His-48, Cys-65, and His-68.

As to quaternary structure, monomer. Carbazole 1,9a-dioxygenase complex consists of a terminal oxygenase component CarAa, a ferredoxin reductase component CarAd and a ferredoxin component CarAc. The cofactor is [2Fe-2S] cluster.

Functionally, part of the multicomponent carbazole 1,9a-dioxygenase (CARDO), that converts carbazole (CAR) into 2-aminobiphenyl-2,3-diol. Acts as a mediator in the electron transfer from CarAd to CarAa. In Metapseudomonas resinovorans (Pseudomonas resinovorans), this protein is Ferredoxin CarAc (carAc).